The sequence spans 424 residues: MGLPQNKLSFFCFFFLVSVLTLAPLAFSEIFLEEHFEGGWKSRWVLSDWKRNEGKAGTFKHTAGKWPGDPDNKGIQTYNDAKHYAISAKIPEFSNKNRTLVVQYSVKIEQDIECGGAYIKLLSGYVNQKQFGGDTPYSLMFGPDICGTQTKKLHVIVSYQGQNYPIKKDLQCETDKLNHFYTFILRPDASYSVLVDNKEREFGSMYTDWDILPPRKIKVKNAKKPEDWDDREYIDDPNDVKPEGFDSIPREIPDRKAKEPEDWDEEENGLWEPPKIPNSAYKGPWKAKRIKNPNYKGKWKNPWIDNPEFEDDPDLYVLKSIKYAGIEVWQVKAGSIFDNILICDDPAYARSIVDDYFAQHRESEKELFAEAEKERKAREDEEARIAREEGERRRKERDHRYGDRRRRYKRPNPRDYMDDYHDEL.

The first 28 residues, 1-28, serve as a signal peptide directing secretion; it reads MGLPQNKLSFFCFFFLVSVLTLAPLAFS. A glycan (N-linked (GlcNAc...) asparagine) is linked at Asn97. Cysteines 114 and 146 form a disulfide. Positions 118, 120, 137, and 144 each coordinate an alpha-D-glucoside. Repeat copies occupy residues 200 to 211, 219 to 230, 236 to 247, 254 to 265, 269 to 279, 283 to 293, and 297 to 307. Positions 200-265 are 4 X approximate repeats; that stretch reads REFGSMYTDW…KAKEPEDWDE (66 aa). Acidic residues predominate over residues 228-237; it reads WDDREYIDDP. Residues 228-275 are disordered; it reads WDDREYIDDPNDVKPEGFDSIPREIPDRKAKEPEDWDEEENGLWEPPK. Basic and acidic residues predominate over residues 238–260; that stretch reads NDVKPEGFDSIPREIPDRKAKEP. Positions 269 to 307 are 3 X approximate repeats; that stretch reads GLWEPPKIPNSAYKGPWKAKRIKNPNYKGKWKNPWIDNP. Glu327 serves as a coordination point for an alpha-D-glucoside. The span at 368-401 shows a compositional bias: basic and acidic residues; that stretch reads FAEAEKERKAREDEEARIAREEGERRRKERDHRY. The segment at 368–424 is disordered; the sequence is FAEAEKERKAREDEEARIAREEGERRRKERDHRYGDRRRRYKRPNPRDYMDDYHDEL. The span at 402–411 shows a compositional bias: basic residues; it reads GDRRRRYKRP. The span at 412 to 424 shows a compositional bias: basic and acidic residues; that stretch reads NPRDYMDDYHDEL. The Prevents secretion from ER signature appears at 421–424; that stretch reads HDEL.

Belongs to the calreticulin family.

The protein localises to the endoplasmic reticulum lumen. Molecular calcium-binding chaperone promoting folding, oligomeric assembly and quality control in the ER via the calreticulin/calnexin cycle. This lectin may interact transiently with almost all of the monoglucosylated glycoproteins that are synthesized in the ER. Required for elongation factor Tu receptor (EFR) accumulation and for EFR, but not flagellin-sensing 2 (FLS2) signaling. This Arabidopsis thaliana (Mouse-ear cress) protein is Calreticulin-3 (CRT3).